The chain runs to 45 residues: Alpha-conotoxin-like Lp1.10 (45 aa).

The propeptide occupies V1 to R27. 2 cysteine pairs are disulfide-bonded: C30/C36 and C31/C44. Residues H32–A34 form a lacks the Ser-Xaa-Pro motif that is crucial for potent interaction with nAChR region. Position 44 is a cysteine amide (C44).

It belongs to the conotoxin A superfamily. In terms of tissue distribution, expressed by the venom duct.

The protein resides in the secreted. Alpha-conotoxins act on postsynaptic membranes, they bind to the nicotinic acetylcholine receptors (nAChR) and thus inhibit them. Has possibly a distinct nAChR binding mode from other alpha-conotoxins, due to a different three residue motif (lacks the Ser-Xaa-Pro motif). The polypeptide is Alpha-conotoxin-like Lp1.10 (Conus leopardus (Leopard cone)).